Consider the following 194-residue polypeptide: Small ribosomal subunit protein uS4 (194 aa).

Residue Lys-66 is modified to N6-acetyllysine. Lys-93 is covalently cross-linked (Glycyl lysine isopeptide (Lys-Gly) (interchain with G-Cter in SUMO2)). The S4 RNA-binding domain occupies 108 to 182 (RRLQTQVFKL…VKRKNAKKGQ (75 aa)). The residue at position 116 (Lys-116) is an N6-acetyllysine. A Glycyl lysine isopeptide (Lys-Gly) (interchain with G-Cter in SUMO2) cross-link involves residue Lys-139. Position 153 is a phosphoserine (Ser-153). Residue Lys-155 is modified to N6-acetyllysine. The tract at residues 162-194 (RSPYGGGRPGRVKRKNAKKGQGGAGAGDDEEED) is disordered. Ser-163 is modified (phosphoserine).

Belongs to the universal ribosomal protein uS4 family. Component of the small ribosomal subunit. Part of the small subunit (SSU) processome, composed of more than 70 proteins and the RNA chaperone small nucleolar RNA (snoRNA) U3.

The protein resides in the cytoplasm. Its subcellular location is the nucleus. It localises to the nucleolus. Component of the small ribosomal subunit. The ribosome is a large ribonucleoprotein complex responsible for the synthesis of proteins in the cell. Part of the small subunit (SSU) processome, first precursor of the small eukaryotic ribosomal subunit. During the assembly of the SSU processome in the nucleolus, many ribosome biogenesis factors, an RNA chaperone and ribosomal proteins associate with the nascent pre-rRNA and work in concert to generate RNA folding, modifications, rearrangements and cleavage as well as targeted degradation of pre-ribosomal RNA by the RNA exosome. The polypeptide is Small ribosomal subunit protein uS4 (RPS9) (Papio anubis (Olive baboon)).